The chain runs to 124 residues: Small ribosomal subunit protein uS12 (124 aa).

D90 carries the 3-methylthioaspartic acid modification.

The protein belongs to the universal ribosomal protein uS12 family. In terms of assembly, part of the 30S ribosomal subunit. Contacts proteins S8 and S17. May interact with IF1 in the 30S initiation complex.

In terms of biological role, with S4 and S5 plays an important role in translational accuracy. Functionally, interacts with and stabilizes bases of the 16S rRNA that are involved in tRNA selection in the A site and with the mRNA backbone. Located at the interface of the 30S and 50S subunits, it traverses the body of the 30S subunit contacting proteins on the other side and probably holding the rRNA structure together. The combined cluster of proteins S8, S12 and S17 appears to hold together the shoulder and platform of the 30S subunit. The chain is Small ribosomal subunit protein uS12 from Wolbachia pipientis subsp. Culex pipiens (strain wPip).